Reading from the N-terminus, the 332-residue chain is MKVSYEELKSEFKRVLLSRNVREDIAEECATVFADTTQAGAYSHGVNRFPRFIQQLENGDIKPEAQPTKVLSLGAIEQWDAHQAIGNLTAKKMMDRAMELASQNGVGIVALRNANHWMRGGSYGWQAAEKGYIGICWTNALAVMPPWGAKECRIGTNPLIVAVPTTPITMVDMSCSMYSYGMLEVHRLQGRQTFVDAGFDDNNNPTRDPATVEKNRRLMPMGFWKGSGLSIVLDMIATLLSNGESTAAVTEDKDDEYCVSQVFIAIEVDRLIDGKTKDEKLNRIMDYVKTAEPVDPNQPVRLPGHEFTTILADNKANGIPVDDTVWAKLKSL.

His-44 serves as the catalytic Proton donor. NAD(+) is bound by residues 168–174 (ITMVDMS), 224–225 (WK), and 304–306 (GHE).

It belongs to the LDH2/MDH2 oxidoreductase family. DlgD subfamily. In terms of assembly, homodimer.

Its subcellular location is the cytoplasm. The enzyme catalyses 3-dehydro-L-gulonate + NAD(+) = 2,3-dioxo-L-gulonate + NADH + H(+). The catalysed reaction is 3-dehydro-L-gulonate + NADP(+) = 2,3-dioxo-L-gulonate + NADPH + H(+). In terms of biological role, catalyzes the reduction of 2,3-diketo-L-gulonate in the presence of NADH, to form 3-keto-L-gulonate. The chain is 2,3-diketo-L-gulonate reductase from Mannheimia succiniciproducens (strain KCTC 0769BP / MBEL55E).